The sequence spans 238 residues: DNA repair protein RAD59 (238 aa).

It belongs to the RAD52 family. As to quaternary structure, interacts with RAD51 and RAD52.

It is found in the nucleus. Involved in the repair of double-strand breaks in DNA during vegetative growth via recombination and single-strand annealing. Anneals complementary single-stranded DNA. This is DNA repair protein RAD59 (RAD59) from Saccharomyces cerevisiae (strain ATCC 204508 / S288c) (Baker's yeast).